The primary structure comprises 328 residues: Small ribosomal subunit protein bS1A (328 aa).

S1 motif domains are found at residues 31–100, 118–182, and 196–264; these read GDIV…LSIR, DATV…LSHR, and AQVV…LSTK. Residues 298–328 are disordered; it reads EAQGIPYEPPTSVDDTDDEEDESLAVSAVDE. Residues 311–328 are compositionally biased toward acidic residues; the sequence is DDTDDEEDESLAVSAVDE.

The protein belongs to the bacterial ribosomal protein bS1 family.

Its function is as follows. Binds mRNA. This chain is Small ribosomal subunit protein bS1A (rps1A), found in Synechocystis sp. (strain ATCC 27184 / PCC 6803 / Kazusa).